The chain runs to 689 residues: Glycine--tRNA ligase beta subunit (689 aa).

It belongs to the class-II aminoacyl-tRNA synthetase family. In terms of assembly, tetramer of two alpha and two beta subunits.

Its subcellular location is the cytoplasm. It carries out the reaction tRNA(Gly) + glycine + ATP = glycyl-tRNA(Gly) + AMP + diphosphate. The protein is Glycine--tRNA ligase beta subunit of Escherichia coli O17:K52:H18 (strain UMN026 / ExPEC).